We begin with the raw amino-acid sequence, 417 residues long: Serine hydroxymethyltransferase 1 (417 aa).

(6S)-5,6,7,8-tetrahydrofolate-binding positions include L121 and 125–127; that span reads GHL. K229 bears the N6-(pyridoxal phosphate)lysine mark. (6S)-5,6,7,8-tetrahydrofolate is bound at residue 354-356; the sequence is SPF.

This sequence belongs to the SHMT family. In terms of assembly, homodimer. The cofactor is pyridoxal 5'-phosphate.

Its subcellular location is the cytoplasm. The catalysed reaction is (6R)-5,10-methylene-5,6,7,8-tetrahydrofolate + glycine + H2O = (6S)-5,6,7,8-tetrahydrofolate + L-serine. It functions in the pathway one-carbon metabolism; tetrahydrofolate interconversion. It participates in amino-acid biosynthesis; glycine biosynthesis; glycine from L-serine: step 1/1. Catalyzes the reversible interconversion of serine and glycine with tetrahydrofolate (THF) serving as the one-carbon carrier. This reaction serves as the major source of one-carbon groups required for the biosynthesis of purines, thymidylate, methionine, and other important biomolecules. Also exhibits THF-independent aldolase activity toward beta-hydroxyamino acids, producing glycine and aldehydes, via a retro-aldol mechanism. This is Serine hydroxymethyltransferase 1 from Pseudomonas syringae pv. syringae (strain B728a).